A 1268-amino-acid polypeptide reads, in one-letter code: Vigilin (1268 aa).

S2 is modified (N-acetylserine). T8 is subject to Phosphothreonine. Phosphoserine is present on residues S11, S31, and S35. KH domains follow at residues 158–229 (PKEH…RLEV), 230–302 (EKAF…AVEV), 303–371 (KKSQ…SVAA), 372–442 (PSWL…EINI), 443–514 (DHKF…DLII), 515–588 (EQRF…SVPI), 589–660 (FKQF…EVSI), 661–734 (PAKL…DIRA), 735–807 (KPEY…SMLV), 808–880 (DPKH…ECAI), 881–979 (PQKF…EVEV), 980–1059 (PFDL…SVTV), 1060–1134 (DPKY…DVPL), and 1135–1209 (DHRV…ALQV). Phosphothreonine occurs at positions 295 and 296. S317 carries the post-translational modification Phosphoserine. Position 437 is a phosphotyrosine (Y437). S645 carries the post-translational modification Phosphoserine. A disordered region spans residues 910 to 947 (PDREENPVHSTEPAVQENGDEAGEGREAKDSDPGSPRR). The span at 932 to 947 (GEGREAKDSDPGSPRR) shows a compositional bias: basic and acidic residues. K991 bears the N6-acetyllysine mark. Polar residues predominate over residues 1237–1249 (SSEKAPDMSSSEE). A disordered region spans residues 1237–1268 (SSEKAPDMSSSEEFPSFGAQVAPKTLPWGPKR). A phosphoserine mark is found at S1247 and S1252.

The protein resides in the cytoplasm. Its subcellular location is the nucleus. Functionally, appears to play a role in cell sterol metabolism. It may function to protect cells from over-accumulation of cholesterol. The chain is Vigilin (HDLBP) from Pongo abelii (Sumatran orangutan).